The following is a 312-amino-acid chain: Methionyl-tRNA formyltransferase (312 aa).

Residue 109 to 112 participates in (6S)-5,6,7,8-tetrahydrofolate binding; the sequence is SLLP.

The protein belongs to the Fmt family.

The enzyme catalyses L-methionyl-tRNA(fMet) + (6R)-10-formyltetrahydrofolate = N-formyl-L-methionyl-tRNA(fMet) + (6S)-5,6,7,8-tetrahydrofolate + H(+). Attaches a formyl group to the free amino group of methionyl-tRNA(fMet). The formyl group appears to play a dual role in the initiator identity of N-formylmethionyl-tRNA by promoting its recognition by IF2 and preventing the misappropriation of this tRNA by the elongation apparatus. This chain is Methionyl-tRNA formyltransferase, found in Listeria monocytogenes serotype 4b (strain CLIP80459).